We begin with the raw amino-acid sequence, 540 residues long: Terminase large subunit (540 aa).

D352, D424, and D523 together coordinate Mn(2+).

This sequence belongs to the skunavirus terminase large subunit family. In terms of assembly, interacts with the terminase small subunit; the active complex is probably heterooligomeric. Requires Mn(2+) as cofactor. Mg(2+) is required as a cofactor.

The terminase large subunit acts as an ATP driven molecular motor necessary for viral DNA translocation into empty capsids and as an endonuclease that cuts the viral genome to initiate and to end a packaging reaction. The terminase lies at a unique vertex of the procapsid and is composed of two subunits, a small terminase subunit involved in viral DNA recognition (packaging sequence), and a large terminase subunit possessing endonucleolytic and ATPase activities. Both terminase subunits heterooligomerize and are docked on the portal protein to form the packaging machine. The terminase large subunit exhibits endonuclease activity and cleaves the viral genome concatemer. This is Terminase large subunit from Lactococcus lactis (Lactococcus lactis bacteriophage SK1).